A 212-amino-acid chain; its full sequence is Pyrrolidone-carboxylate peptidase (212 aa).

Residues Glu80, Cys143, and His165 contribute to the active site.

The protein belongs to the peptidase C15 family. As to quaternary structure, homotetramer.

It localises to the cytoplasm. The catalysed reaction is Release of an N-terminal pyroglutamyl group from a polypeptide, the second amino acid generally not being Pro.. Functionally, removes 5-oxoproline from various penultimate amino acid residues except L-proline. The polypeptide is Pyrrolidone-carboxylate peptidase (Vibrio vulnificus (strain YJ016)).